The sequence spans 481 residues: Ribulose bisphosphate carboxylase large chain (481 aa).

The propeptide occupies 1 to 2; sequence MS. N-acetylproline is present on Pro3. Lys14 bears the N6,N6,N6-trimethyllysine mark. Asn123 and Thr173 together coordinate substrate. Catalysis depends on Lys175, which acts as the Proton acceptor. Lys177 is a substrate binding site. The Mg(2+) site is built by Lys201, Asp203, and Glu204. Lys201 carries the post-translational modification N6-carboxylysine. The active-site Proton acceptor is His294. Substrate is bound by residues Arg295, His327, and Ser379.

This sequence belongs to the RuBisCO large chain family. Type I subfamily. In terms of assembly, heterohexadecamer of 8 large chains and 8 small chains; disulfide-linked. The disulfide link is formed within the large subunit homodimers. It depends on Mg(2+) as a cofactor. The disulfide bond which can form in the large chain dimeric partners within the hexadecamer appears to be associated with oxidative stress and protein turnover.

It is found in the plastid. The catalysed reaction is 2 (2R)-3-phosphoglycerate + 2 H(+) = D-ribulose 1,5-bisphosphate + CO2 + H2O. It catalyses the reaction D-ribulose 1,5-bisphosphate + O2 = 2-phosphoglycolate + (2R)-3-phosphoglycerate + 2 H(+). In terms of biological role, ruBisCO catalyzes two reactions: the carboxylation of D-ribulose 1,5-bisphosphate, the primary event in carbon dioxide fixation, as well as the oxidative fragmentation of the pentose substrate in the photorespiration process. Both reactions occur simultaneously and in competition at the same active site. The sequence is that of Ribulose bisphosphate carboxylase large chain from Cuscuta sandwichiana (Kauna'oa).